A 401-amino-acid chain; its full sequence is Nodal homolog 3-A (401 aa).

The signal sequence occupies residues 1–18 (MAFLSLFLCLVFSSPLMA). A propeptide spanning residues 19-274 (MPPALQGRKA…KVNGFRRLRR (256 aa)) is cleaved from the precursor. Residues Asn168, Asn337, and Asn344 are each glycosylated (N-linked (GlcNAc...) asparagine). Disulfide bonds link Cys299–Cys365 and Cys328–Cys396.

The protein belongs to the TGF-beta family. As to quaternary structure, monomer. The propeptide region interacts with bmp4 in a non-covalent manner. Expressed in the dorsal marginal region of late blastula, becoming restricted to the Spemann organizer at the early gastrula stage.

Its subcellular location is the secreted. Exhibits mesoderm-dorsalizing activity and neural-inducing activity, but lacks mesoderm-inducing activity. Regulates the expression of specific mesodermal and neural genes. Induces convergent extension movements at the embryonic midline by activating the fgf signaling pathway to induce t/bra expression in the organizer region. Acts with wnt11 to induce Spemann organizer cells and induce axis formation. The unprocessed protein antagonizes bmp-signaling. This is Nodal homolog 3-A from Xenopus tropicalis (Western clawed frog).